The chain runs to 537 residues: Mitochondria-eating protein (537 aa).

Positions 1–270 (MAESLKKLAK…SHSRSRSHSR (270 aa)) are interaction with YWHAG/14-3-3 protein gamma. Ser13, Ser85, Ser123, Ser127, Ser154, and Ser157 each carry phosphoserine. The interval 109 to 150 (SKNRDNSPDQDQHQSDNESFSETQPTQVQDDLAESGKSLEGA) is disordered. Residues 110–124 (KNRDNSPDQDQHQSD) are compositionally biased toward basic and acidic residues. Polar residues predominate over residues 125–137 (NESFSETQPTQVQ). Coiled coils occupy residues 152-184 (NGSTISLLAAEEEINQLKKQLKSLQAQEDARHK) and 210-243 (QDVVSNYEKHLQNLKEEIAVLSAEKSGLQGRSAR). 2 disordered regions span residues 171 to 212 (QLKS…PQDV) and 233 to 291 (EKSG…RAKM). Positions 179-209 (EDARHKTSENRRSEALKSDHRSTKRTQDQRP) are enriched in basic and acidic residues. Positions 239 to 251 (GRSARSPSPSTGT) are enriched in low complexity. Residues 252–269 (RSHRRGRSRSHSRSRSHS) are compositionally biased toward basic residues. Ser283, Ser285, and Ser508 each carry phosphoserine.

The protein belongs to the MIEAP family. As to quaternary structure, interacts (via coiled-coil domains) with BNIP3L (via BH3 domain). Interacts (via coiled-coil domains) with BNIP3 (via BH3 domain). Interacts with YWHAG/14-3-3 protein gamma; a protein that also plays a role in MALM. As to expression, in testis, expressed primarily in spermatids.

The protein resides in the cytoplasm. The protein localises to the cytosol. Its subcellular location is the mitochondrion outer membrane. It localises to the mitochondrion matrix. Its function is as follows. Key regulator of mitochondrial quality that mediates the repairing or degradation of unhealthy mitochondria in response to mitochondrial damage. Mediator of mitochondrial protein catabolic process (also named MALM) by mediating the degradation of damaged proteins inside mitochondria by promoting the accumulation in the mitochondrial matrix of hydrolases that are characteristic of the lysosomal lumen. Also involved in mitochondrion degradation of damaged mitochondria by promoting the formation of vacuole-like structures (named MIV), which engulf and degrade unhealthy mitochondria by accumulating lysosomes. The physical interaction of SPATA18/MIEAP, BNIP3 and BNIP3L/NIX at the mitochondrial outer membrane regulates the opening of a pore in the mitochondrial double membrane in order to mediate the translocation of lysosomal proteins from the cytoplasm to the mitochondrial matrix. Binds cardiolipin. May form molecular condensates (non-membrane-bounded organelles) within mitochondria that compartmentalize and promote cardiolipin metabolism. In Mus musculus (Mouse), this protein is Mitochondria-eating protein (Spata18).